A 92-amino-acid chain; its full sequence is Probable Fe(2+)-trafficking protein (92 aa).

It belongs to the Fe(2+)-trafficking protein family.

In terms of biological role, could be a mediator in iron transactions between iron acquisition and iron-requiring processes, such as synthesis and/or repair of Fe-S clusters in biosynthetic enzymes. The polypeptide is Probable Fe(2+)-trafficking protein (Shewanella pealeana (strain ATCC 700345 / ANG-SQ1)).